We begin with the raw amino-acid sequence, 525 residues long: Bifunctional purine biosynthesis protein PurH (525 aa).

The 149-residue stretch at Met-1–Thr-149 folds into the MGS-like domain.

The protein belongs to the PurH family.

It catalyses the reaction (6R)-10-formyltetrahydrofolate + 5-amino-1-(5-phospho-beta-D-ribosyl)imidazole-4-carboxamide = 5-formamido-1-(5-phospho-D-ribosyl)imidazole-4-carboxamide + (6S)-5,6,7,8-tetrahydrofolate. The catalysed reaction is IMP + H2O = 5-formamido-1-(5-phospho-D-ribosyl)imidazole-4-carboxamide. It functions in the pathway purine metabolism; IMP biosynthesis via de novo pathway; 5-formamido-1-(5-phospho-D-ribosyl)imidazole-4-carboxamide from 5-amino-1-(5-phospho-D-ribosyl)imidazole-4-carboxamide (10-formyl THF route): step 1/1. It participates in purine metabolism; IMP biosynthesis via de novo pathway; IMP from 5-formamido-1-(5-phospho-D-ribosyl)imidazole-4-carboxamide: step 1/1. The polypeptide is Bifunctional purine biosynthesis protein PurH (Prosthecochloris aestuarii (strain DSM 271 / SK 413)).